A 247-amino-acid chain; its full sequence is UPF0612 protein P20C8.01c (247 aa).

2 coiled-coil regions span residues 27 to 63 (IKRY…MKYE) and 138 to 225 (DTVQ…DARS).

The protein belongs to the UPF0612 family.

Its subcellular location is the cytoplasm. This chain is UPF0612 protein P20C8.01c, found in Schizosaccharomyces pombe (strain 972 / ATCC 24843) (Fission yeast).